Here is a 125-residue protein sequence, read N- to C-terminus: Large ribosomal subunit protein bL20 (125 aa).

Belongs to the bacterial ribosomal protein bL20 family.

Binds directly to 23S ribosomal RNA and is necessary for the in vitro assembly process of the 50S ribosomal subunit. It is not involved in the protein synthesizing functions of that subunit. This is Large ribosomal subunit protein bL20 from Thermobifida fusca (strain YX).